The primary structure comprises 334 residues: Glyceraldehyde-3-phosphate dehydrogenase (334 aa).

NAD(+)-binding positions include 12-13 (TI) and glycine 111. 140-142 (SCN) is a D-glyceraldehyde 3-phosphate binding site. The active-site Nucleophile is the cysteine 141. Arginine 167 is an NAD(+) binding site. A D-glyceraldehyde 3-phosphate-binding site is contributed by 192–193 (HG). Glutamine 298 lines the NAD(+) pocket.

Belongs to the glyceraldehyde-3-phosphate dehydrogenase family. Homotetramer.

It is found in the cytoplasm. The enzyme catalyses D-glyceraldehyde 3-phosphate + phosphate + NADP(+) = (2R)-3-phospho-glyceroyl phosphate + NADPH + H(+). It catalyses the reaction D-glyceraldehyde 3-phosphate + phosphate + NAD(+) = (2R)-3-phospho-glyceroyl phosphate + NADH + H(+). It participates in carbohydrate degradation; glycolysis; pyruvate from D-glyceraldehyde 3-phosphate: step 1/5. This Thermococcus kodakarensis (strain ATCC BAA-918 / JCM 12380 / KOD1) (Pyrococcus kodakaraensis (strain KOD1)) protein is Glyceraldehyde-3-phosphate dehydrogenase.